Reading from the N-terminus, the 232-residue chain is Orotidine 5'-phosphate decarboxylase (232 aa).

Substrate-binding positions include Asp11, Lys33, 60-69, Thr119, Arg180, Gln189, Gly209, and Arg210; that span reads DLKFHDIPHT. Lys62 functions as the Proton donor in the catalytic mechanism.

It belongs to the OMP decarboxylase family. Type 1 subfamily. Homodimer.

It catalyses the reaction orotidine 5'-phosphate + H(+) = UMP + CO2. The protein operates within pyrimidine metabolism; UMP biosynthesis via de novo pathway; UMP from orotate: step 2/2. Its function is as follows. Catalyzes the decarboxylation of orotidine 5'-monophosphate (OMP) to uridine 5'-monophosphate (UMP). The chain is Orotidine 5'-phosphate decarboxylase from Nitrosococcus oceani (strain ATCC 19707 / BCRC 17464 / JCM 30415 / NCIMB 11848 / C-107).